The chain runs to 879 residues: DNA mismatch repair protein MutS (879 aa).

629 to 636 provides a ligand contact to ATP; the sequence is GPNMGGKS.

Belongs to the DNA mismatch repair MutS family.

Its function is as follows. This protein is involved in the repair of mismatches in DNA. It is possible that it carries out the mismatch recognition step. This protein has a weak ATPase activity. The chain is DNA mismatch repair protein MutS from Erythrobacter litoralis (strain HTCC2594).